We begin with the raw amino-acid sequence, 830 residues long: Lon protease (830 aa).

A disordered region spans residues 1–28 (MTFDTNDDSIAKNSLAPYNQETEQQQEE). The Lon N-terminal domain occupies 50-245 (IPILPLRDVV…LVITHLTHEA (196 aa)). 397–404 (GPPGVGKT) is an ATP binding site. In terms of domain architecture, Lon proteolytic spans 633–814 (TLPPGVALGL…DEVLPLAFSE (182 aa)). Catalysis depends on residues Ser-720 and Lys-763.

This sequence belongs to the peptidase S16 family. As to quaternary structure, homohexamer. Organized in a ring with a central cavity.

It is found in the cytoplasm. It carries out the reaction Hydrolysis of proteins in presence of ATP.. Functionally, ATP-dependent serine protease that mediates the selective degradation of mutant and abnormal proteins as well as certain short-lived regulatory proteins. Required for cellular homeostasis and for survival from DNA damage and developmental changes induced by stress. Degrades polypeptides processively to yield small peptide fragments that are 5 to 10 amino acids long. Binds to DNA in a double-stranded, site-specific manner. The protein is Lon protease of Lawsonia intracellularis (strain PHE/MN1-00).